Here is a 658-residue protein sequence, read N- to C-terminus: Integrator complex subunit 9 (658 aa).

Residue Lys-58 forms a Glycyl lysine isopeptide (Lys-Gly) (interchain with G-Cter in SUMO2) linkage. The disordered stretch occupies residues 548–573 (DNKHVLQPPPRPTQPTGGKKRKRASD). Positions 566-570 (KKRKR) match the Nuclear localization signal motif.

This sequence belongs to the metallo-beta-lactamase superfamily. RNA-metabolizing metallo-beta-lactamase-like family. INTS9 subfamily. As to quaternary structure, component of the Integrator complex, composed of core subunits INTS1, INTS2, INTS3, INTS4, INTS5, INTS6, INTS7, INTS8, INTS9/RC74, INTS10, INTS11/CPSF3L, INTS12, INTS13, INTS14 and INTS15. The core complex associates with protein phosphatase 2A subunits PPP2CA and PPP2R1A, to form the Integrator-PP2A (INTAC) complex. INTS9 is part of the RNA endonuclease subcomplex, composed of INTS4, INTS9, INTS11 and inositol hexakisphosphate (InsP6). Interacts with WDR73; interaction is required for the assembly of the RNA endonuclease subcomplex in the cytoplasm. Interacts with BRAT1; interaction is required for the assembly of the RNA endonuclease subcomplex. Interacts with ESRRB, ESRRB is not a core component of the Integrator complex and this association is a bridge for the interaction with the multiprotein complex Integrator; attracts the transcriptional machinery.

The protein resides in the nucleus. Its subcellular location is the cytoplasm. In terms of biological role, component of the integrator complex, a multiprotein complex that terminates RNA polymerase II (Pol II) transcription in the promoter-proximal region of genes. The integrator complex provides a quality checkpoint during transcription elongation by driving premature transcription termination of transcripts that are unfavorably configured for transcriptional elongation: the complex terminates transcription by (1) catalyzing dephosphorylation of the C-terminal domain (CTD) of Pol II subunit POLR2A/RPB1 and SUPT5H/SPT5, (2) degrading the exiting nascent RNA transcript via endonuclease activity and (3) promoting the release of Pol II from bound DNA. The integrator complex is also involved in terminating the synthesis of non-coding Pol II transcripts, such as enhancer RNAs (eRNAs), small nuclear RNAs (snRNAs), telomerase RNAs and long non-coding RNAs (lncRNAs). Mediates recruitment of cytoplasmic dynein to the nuclear envelope, probably as component of the integrator complex. The polypeptide is Integrator complex subunit 9 (INTS9) (Bos taurus (Bovine)).